The primary structure comprises 265 residues: MGRSRSRSSSRSKHAKSGKHNKKRSRSREKERVRKRSKSRESKRNRRRESRSRSRSNTASRRERERAASPPDRIDIFGRTVSKRSSLDEKQKREDEEKKAEYERQRRIRQQEIEEKLIEEETARRVEELVAKRVEEELEKRKDEIEREVLRRVEEAKRIMEKQLLEELERQRQAELAAQKAREEEERAKREELERILEENNRKIADAQAKLAEEQLKIVEEQRKIHEERMKLEQERQRQQKEEQKIILGKGKSRPKLSFSLKSPD.

Residues Met1–Ser54 show a composition bias toward basic residues. A necessary and sufficient for RNA binding region spans residues Met1 to Arg66. The interval Met1–Arg106 is disordered. Basic and acidic residues-rich tracts occupy residues Ser60–Ile76 and Ser85–Arg106. Residues Ala67–Asp265 are necessary and sufficient for transcriptional regulation. The short motif at Leu164–Leu168 is the LXXLL motif 1; degenerate element. The short motif at Leu193–Leu197 is the LXXLL motif 2; degenerate element. Over residues Arg229–Lys245 the composition is skewed to basic and acidic residues. A disordered region spans residues Arg229–Asp265.

This sequence belongs to the ARGLU1 family.

It localises to the nucleus. It is found in the nucleus speckle. Its subcellular location is the chromosome. Functionally, dual function regulator of gene expression; regulator of transcription and modulator of alternative splicing. General coactivator of nuclear receptor-induced gene expression. This is Arginine and glutamate-rich protein 1 (arglu1) from Xenopus tropicalis (Western clawed frog).